The sequence spans 236 residues: Methylosome subunit pICln (236 aa).

Position 2 is an N-acetylserine (serine 2). A phosphoserine mark is found at serine 95, serine 143, serine 192, serine 194, serine 197, and serine 209. A disordered region spans residues 134 to 158 (LHPDPEDEDSDDYDGEEYDVEAHEQ). Acidic residues predominate over residues 138 to 152 (PEDEDSDDYDGEEYD). Threonine 222 bears the Phosphothreonine mark.

The protein belongs to the pICln (TC 1.A.47) family. Component of the methylosome, a 20S complex containing at least PRMT5/SKB1, WDR77/MEP50 and CLNS1A/pICln. May mediate SNRPD1 and SNRPD3 methylation. Forms a 6S pICln-Sm complex composed of CLNS1A/pICln, SNRPD1, SNRPD2, SNRPE, SNRPF and SNRPG; ring-like structure where CLNS1A/pICln mimics additional Sm proteins and which is unable to assemble into the core snRNP. Interacts with LSM10 and LSM11. Expressed in most tissues.

The protein resides in the cytoplasm. It localises to the cytosol. The protein localises to the nucleus. It is found in the cytoskeleton. In terms of biological role, involved in both the assembly of spliceosomal snRNPs and the methylation of Sm proteins. Chaperone that regulates the assembly of spliceosomal U1, U2, U4 and U5 small nuclear ribonucleoproteins (snRNPs), the building blocks of the spliceosome, and thereby plays an important role in the splicing of cellular pre-mRNAs. Most spliceosomal snRNPs contain a common set of Sm proteins SNRPB, SNRPD1, SNRPD2, SNRPD3, SNRPE, SNRPF and SNRPG that assemble in a heptameric protein ring on the Sm site of the small nuclear RNA to form the core snRNP (Sm core). In the cytosol, the Sm proteins SNRPD1, SNRPD2, SNRPE, SNRPF and SNRPG are trapped in an inactive 6S pICln-Sm complex by the chaperone CLNS1A that controls the assembly of the core snRNP. Dissociation by the SMN complex of CLNS1A from the trapped Sm proteins and their transfer to an SMN-Sm complex triggers the assembly of core snRNPs and their transport to the nucleus. The protein is Methylosome subunit pICln (Clns1a) of Rattus norvegicus (Rat).